The chain runs to 873 residues: DNA helicase/primase complex-associated protein (873 aa).

The interval 394 to 422 (PPLPRDDGDGENNVVEVSSSTGGAHPPSD) is disordered.

Belongs to the herpesviridae HEPA family. As to quaternary structure, associates with the primase and the helicase to form the helicase-primase complex. Interacts with the origin-binding protein. Interacts with the polymerase catalytic subunit.

The protein resides in the host nucleus. Component of the helicase/primase complex. Unwinds the DNA at the replication forks and generates single-stranded DNA for both leading and lagging strand synthesis. The primase synthesizes short RNA primers on the lagging strand that the polymerase presumably elongates using dNTPs. The primase-associated factor has no known catalytic activity in the complex and may serve to facilitate the formation of the replisome by directly interacting with the origin-binding protein and the polymerase. In Human cytomegalovirus (strain Merlin) (HHV-5), this protein is DNA helicase/primase complex-associated protein (UL102).